Reading from the N-terminus, the 355-residue chain is Protein RecA (355 aa).

Residue 72–79 (GPESSGKT) coordinates ATP.

It belongs to the RecA family.

Its subcellular location is the cytoplasm. Its function is as follows. Can catalyze the hydrolysis of ATP in the presence of single-stranded DNA, the ATP-dependent uptake of single-stranded DNA by duplex DNA, and the ATP-dependent hybridization of homologous single-stranded DNAs. It interacts with LexA causing its activation and leading to its autocatalytic cleavage. The sequence is that of Protein RecA from Thermosynechococcus vestitus (strain NIES-2133 / IAM M-273 / BP-1).